The primary structure comprises 518 residues: ATPase expression protein 2, mitochondrial (518 aa).

The N-terminal 15 residues, 1–15 (MLKKSRVLGKIPIPY), are a transit peptide targeting the mitochondrion.

Belongs to the AEP2 family. In terms of assembly, binds to the 5'UTR of the OLI1 mRNA.

It is found in the mitochondrion. Functionally, required for translation of the mitochondrial OLI1 transcript coding for the mitochondrial ATP synthase subunit 9. This is ATPase expression protein 2, mitochondrial (AEP2) from Kluyveromyces lactis (strain ATCC 8585 / CBS 2359 / DSM 70799 / NBRC 1267 / NRRL Y-1140 / WM37) (Yeast).